A 79-amino-acid chain; its full sequence is Dolichyl-diphosphooligosaccharide--protein glycosyltransferase subunit TMEM258 (79 aa).

Position 1 is an N-acetylmethionine (Met-1). Residues 1-16 are Lumenal-facing; that stretch reads MELEAMSRYTSPVNPA. The helical transmembrane segment at 17–37 threads the bilayer; it reads VFPHLTVVLLAIGMFFTAWFF. The Cytoplasmic portion of the chain corresponds to 38–54; that stretch reads VYEVTSTKYTRDICKEL. A helical transmembrane segment spans residues 55–75; the sequence is LISLVASLFMGFGVLFLLLWV. The Lumenal segment spans residues 76-79; it reads GIYV.

The protein belongs to the OST5 family. In terms of assembly, component of the oligosaccharyltransferase (OST) complex. OST exists in two different complex forms which contain common core subunits RPN1, RPN2, OST48, OST4, DAD1 and TMEM258, either STT3A or STT3B as catalytic subunits, and form-specific accessory subunits. STT3A complex assembly occurs through the formation of 3 subcomplexes. Subcomplex 1 contains RPN1 and TMEM258, subcomplex 2 contains the STT3A-specific subunits STT3A, DC2/OSTC, and KCP2 as well as the core subunit OST4, and subcomplex 3 contains RPN2, DAD1, and OST48. The STT3A complex can form stable complexes with the Sec61 complex or with both the Sec61 and TRAP complexes.

Its subcellular location is the membrane. It is found in the endoplasmic reticulum. It localises to the cytoplasm. It functions in the pathway protein modification; protein glycosylation. Its function is as follows. Subunit of the oligosaccharyl transferase (OST) complex that catalyzes the initial transfer of a defined glycan (Glc(3)Man(9)GlcNAc(2) in eukaryotes) from the lipid carrier dolichol-pyrophosphate to an asparagine residue within an Asn-X-Ser/Thr consensus motif in nascent polypeptide chains, the first step in protein N-glycosylation. N-glycosylation occurs cotranslationally and the complex associates with the Sec61 complex at the channel-forming translocon complex that mediates protein translocation across the endoplasmic reticulum (ER). All subunits are required for a maximal enzyme activity. This Canis lupus familiaris (Dog) protein is Dolichyl-diphosphooligosaccharide--protein glycosyltransferase subunit TMEM258.